Consider the following 145-residue polypeptide: Protein SPMIP3 (145 aa).

This Mus musculus (Mouse) protein is Protein SPMIP3.